Consider the following 994-residue polypeptide: MKSSGSARATRRNAVSSSSAPAHAEPPARRAAKPARKLDGAAARPLAPTNAASAKPQGRTREDKDRPLFEDIRYLGRLLGDVVREQEGDAVFDVVETIRQTAVKFRREDDKAAAQTLEKMLRKLTPEQTVSVVRAFSYFSHLANIAEDRHHNRRRRIHALAGSAAQAGTVAYALDKLKQAGDASSKTIKQFFEGALIVPVLTAHPTEVQRKSILDAQHDIARLLAERDQPLTARELAHNEALLRARVTTLWQTRMLRDARLTVADEIENALSYYRATFLDELPALYADIEEALAEHGLRARVPAFFQMGSWIGGDRDGNPNVTAATLDEAISRQAAVIFEHYLEQVHKLGAELSVSNLLVGASDALKALAAASPDQSPHRVDEPYRRALIGVYTRLAASARVRLGEGTVPVRSAGRGAAPVRATPYADAEEFAADLRVLTDSLALHHGESLATPRLAPLMRAAEVFGFHLASIDLRQSSDIHEAVVAELLARGGVEADYAALPEADKLRVLLAALADPRPLRSPYLDYSDLAKSELGVLERAHAIRAQFGARAVRNYIISHTETVSDLVEVLLLQKETGLFEGTLGTPHANARNGLMVIPLFETIADLRNASDIMRAFFALPGVGELLAHQGHEQEVMLGYSDSNKDGGFLTSNWELYRAELALVDLFDERGIKLRLFHGRGGTVGRGGGPTYQAILSQPPGTVNGQIRLTEQGEVIASKFANPEIGRRNLETVVAATLEATLAPHSNAPKQLPAFEAAMQTLSDAAMASYRALVYETPGFTDYFFSSTPITEIAELNIGSRPASRKLQDPKNRKIEDLRAIPWGFSWGQCRLLLTGWYGFGSAVAAYLDGAPDAAERGKRVALLKKMNKTWPFFANLLSNMDMVLAKTDLAVASRYAQLVADKKLRKHVFERIVAEWHRTADALAEITGAHARLAANPLLARSIKNRFPYLDPLNHLQVELIKRHRAGDTNARLRRGIHLTINGIAAGLRNTG.

Residues 1–66 (MKSSGSARAT…QGRTREDKDR (66 aa)) are disordered. 2 stretches are compositionally biased toward low complexity: residues 14 to 25 (AVSSSSAPAHAE) and 41 to 54 (AAARPLAPTNAASA). Active-site residues include H204 and K646.

Belongs to the PEPCase type 1 family. Requires Mg(2+) as cofactor.

It catalyses the reaction oxaloacetate + phosphate = phosphoenolpyruvate + hydrogencarbonate. Forms oxaloacetate, a four-carbon dicarboxylic acid source for the tricarboxylic acid cycle. In Burkholderia mallei (strain NCTC 10247), this protein is Phosphoenolpyruvate carboxylase.